The sequence spans 153 residues: Ribosome maturation factor RimP (153 aa).

Belongs to the RimP family.

It is found in the cytoplasm. In terms of biological role, required for maturation of 30S ribosomal subunits. This Glaesserella parasuis serovar 5 (strain SH0165) (Haemophilus parasuis) protein is Ribosome maturation factor RimP.